We begin with the raw amino-acid sequence, 84 residues long: GTP cyclohydrolase 1 feedback regulatory protein (84 aa).

Belongs to the GFRP family. As to quaternary structure, homopentamer. Forms a complex with GCH1 where a GCH1 homodecamer is sandwiched by two GFRP homopentamers.

Its subcellular location is the nucleus. It localises to the nucleus membrane. It is found in the cytoplasm. The protein localises to the cytosol. Its function is as follows. Mediates tetrahydrobiopterin inhibition of GTP cyclohydrolase 1. This chain is GTP cyclohydrolase 1 feedback regulatory protein (gchfr), found in Xenopus laevis (African clawed frog).